Here is a 455-residue protein sequence, read N- to C-terminus: Gastric inhibitory polypeptide receptor (455 aa).

The signal sequence occupies residues 1 to 18 (MPLRLLLLLLWLWGLSLQ). Over 19–135 (RAETDSEGQT…DQKLILERLQ (117 aa)) the chain is Extracellular. Cystine bridges form between Cys-43/Cys-67, Cys-58/Cys-100, and Cys-81/Cys-115. 3 N-linked (GlcNAc...) asparagine glycosylation sites follow: Asn-59, Asn-69, and Asn-74. The chain crosses the membrane as a helical span at residues 136–158 (VVYTVGYSLSLATLLLALLILSL). The Cytoplasmic portion of the chain corresponds to 159–166 (FRRLHCTR). A helical transmembrane segment spans residues 167-186 (NYIHMNLFTSFMLRAGAILT). The Extracellular portion of the chain corresponds to 187–214 (RDQLLPPLGPYTGNQTPTLWNQALAACR). A helical membrane pass occupies residues 215–239 (TAQILTQYCVGANYTWLLVEGVYLH). The Cytoplasmic segment spans residues 240-251 (HLLVVVRRSEKG). A helical transmembrane segment spans residues 252-275 (HFRCYLLLGWGAPALFVIPWVIVR). At 276-290 (YLYENTQCWERNEVK) the chain is on the extracellular side. A helical membrane pass occupies residues 291-316 (AIWWIIRTPILITILINFLIFIRILG). The Cytoplasmic segment spans residues 317 to 338 (ILVSKLRTRQMRCPDYRLRLAR). Residues 339-359 (STLTLMPLLGVHEVVFAPVTE) form a helical membrane-spanning segment. At 360–374 (EQAEGSLRFAKLAFE) the chain is on the extracellular side. Residues 375–395 (IFLSSFQGFLVSVLYCFINKE) traverse the membrane as a helical segment. Residues 396-455 (VQSEIRRLRLSLQEQCPRPHLGQAPRAVPLSSAPQEAAIRNALPSGMLHVPGDEVLESYC) lie on the Cytoplasmic side of the membrane.

The protein belongs to the G-protein coupled receptor 2 family. May form homodimers and heterodimers with GLP1R. In terms of processing, N-glycosylation is required for cell surface expression and lengthens receptor half-life by preventing degradation in the ER. As to expression, present in the pancreas as well as the gut, adipose tissue, heart, pituitary, and inner layers of the adrenal cortex, whereas it is not found in kidney, spleen, or liver. It is also expressed in several brain regions, including the cerebral cortex, hippocampus, and olfactory bulb.

It is found in the cell membrane. Its function is as follows. This is a receptor for GIP. The activity of this receptor is mediated by G proteins which activate adenylyl cyclase. In Rattus norvegicus (Rat), this protein is Gastric inhibitory polypeptide receptor (Gipr).